Reading from the N-terminus, the 315-residue chain is Olfactory receptor 5M1 (315 aa).

Residues 1–25 (MFSPNHTIVTEFILLGLTDDPVLEK) lie on the Extracellular side of the membrane. N-linked (GlcNAc...) asparagine glycosylation occurs at N5. The chain crosses the membrane as a helical span at residues 26–46 (ILFGVFLAIYLITLAGNLCMI). The Cytoplasmic portion of the chain corresponds to 47 to 54 (LLIRTNSH). Residues 55–75 (LQTPMYFFLGHLSFVDICYSS) traverse the membrane as a helical segment. Over 76–99 (NVTPNMLHNFLSEQKTISYAGCFT) the chain is Extracellular. C97 and C189 are joined by a disulfide. The chain crosses the membrane as a helical span at residues 100 to 120 (QCLLFIALVITEFYILASMAL). Over 121 to 139 (DRYVAICSPLHYSSRMSKN) the chain is Cytoplasmic. The helical transmembrane segment at 140–160 (ICVCLVTIPYMYGFLSGFSQS) threads the bilayer. Over 161-196 (LLTFHLSFCGSLEINHFYCADPPLIMLACSDTRVKK) the chain is Extracellular. A helical membrane pass occupies residues 197 to 217 (MAMFVVAGFNLSSSLFIILLS). The Cytoplasmic segment spans residues 218-237 (YLFIFAAIFRIRSAEGRHKA). The chain crosses the membrane as a helical span at residues 238–258 (FSTCASHLTIVTLFYGTLFCM). Residues 259 to 271 (YVRPPSEKSVEES) are Extracellular-facing. The helical transmembrane segment at 272–292 (KITAVFYTFLSPMLNPLIYSL) threads the bilayer. Residues 293-315 (RNTDVILAMQQMIRGKSFHKIAV) are Cytoplasmic-facing.

Belongs to the G-protein coupled receptor 1 family.

It is found in the cell membrane. Functionally, odorant receptor. In Homo sapiens (Human), this protein is Olfactory receptor 5M1 (OR5M1).